Here is a 520-residue protein sequence, read N- to C-terminus: DnaJ homolog l(2)tid, mitochondrial (520 aa).

Residues 1 to 62 constitute a mitochondrion transit peptide; that stretch reads MMISCKKLFV…RRLHTTRDLL (62 aa). Position 30 is an omega-N-methylarginine (Arg30). Residues 65 to 130 form the J domain; sequence DYYATLGVAK…QKRREYDTYG (66 aa). Lys106 is modified (N6-acetyllysine). Residues 214–292 form a CR-type zinc finger; it reads GVNKDVNVNV…CEGKGRTVQR (79 aa). The Zn(2+) site is built by Cys227, Cys230, Cys244, Cys247, Cys266, Cys269, Cys280, and Cys283. Residues 227-234 form a CXXCXGXG motif; approximate repeat; sequence CPKCAGTK. Residues 244–251 form a CXXCXGXG motif repeat; that stretch reads CQYCNGTG. The stretch at 266 to 273 is one CXXCXGXG motif; approximate repeat; the sequence is CRYCQGTR. The CXXCXGXG motif repeat unit spans residues 280–287; sequence CSECEGKG. Residues 430–520 form a disordered region; that stretch reads QIHGIANRKD…FISKIKSMFN (91 aa). Over residues 446–476 the composition is skewed to low complexity; that stretch reads AGASEEPGAGAAAKASAAAAGSGASKPGPGA. Over residues 479 to 495 the composition is skewed to basic and acidic residues; the sequence is SEGKDQWTDNKKTKAKE. Residues 496–511 show a composition bias toward gly residues; the sequence is GGGSGSGQGDGGGGGF.

In terms of assembly, interacts with ptc (via C-terminal cytoplasmic region); the interaction is probably direct. Interacts with hh/hedgehog; the interaction is probably mediated by the hedgehog receptor ptc. In terms of processing, appears to produce proteins of differing size. Predicted to have a molecular mass of 56 kDa (TID56) however proteins of 50 kDa, 47 kDa and 40 kDa have been identified and named TID50, TID47 and TID40. TID50 and TID40 localize to the mitochondria while TID47 localizes to the cytoplasm. TID50 is probably TID56 that has undergone mitochondrial transit peptide processing. TID40 and TID47 may be alternately processed proteins or may be isoforms resulting from alternative splicing. In terms of tissue distribution, ubiquitously expressed throughout embryonic development. In larvae, expression is seen in sensory organs, gopplet cells, gonads, imaginal disks, proventriculus, fat body, hematopoietic organ, midgut, Malpighian tubules and ring gland.

It localises to the cytoplasm. The protein resides in the cytosol. The protein localises to the mitochondrion. It is found in the mitochondrion outer membrane. Involved in hh/hedgehog signaling. May act as a tumor suppressor in larval imaginal disks. This Drosophila melanogaster (Fruit fly) protein is DnaJ homolog l(2)tid, mitochondrial.